We begin with the raw amino-acid sequence, 459 residues long: tRNA modification GTPase MnmE (459 aa).

Positions 22, 85, and 124 each coordinate (6S)-5-formyl-5,6,7,8-tetrahydrofolate. The region spanning 221–380 (GLSTVIVGRP…LEIQIKDLFF (160 aa)) is the TrmE-type G domain. Asn-231 serves as a coordination point for K(+). Residues 231-236 (NVGKSS), 250-256 (TEVAGTT), and 275-278 (DTAG) contribute to the GTP site. Ser-235 is a Mg(2+) binding site. Residues Thr-250, Val-252, and Thr-255 each coordinate K(+). Position 256 (Thr-256) interacts with Mg(2+). Lys-459 lines the (6S)-5-formyl-5,6,7,8-tetrahydrofolate pocket.

Belongs to the TRAFAC class TrmE-Era-EngA-EngB-Septin-like GTPase superfamily. TrmE GTPase family. In terms of assembly, homodimer. Heterotetramer of two MnmE and two MnmG subunits. K(+) serves as cofactor.

Its subcellular location is the cytoplasm. In terms of biological role, exhibits a very high intrinsic GTPase hydrolysis rate. Involved in the addition of a carboxymethylaminomethyl (cmnm) group at the wobble position (U34) of certain tRNAs, forming tRNA-cmnm(5)s(2)U34. In Staphylococcus epidermidis (strain ATCC 35984 / DSM 28319 / BCRC 17069 / CCUG 31568 / BM 3577 / RP62A), this protein is tRNA modification GTPase MnmE.